We begin with the raw amino-acid sequence, 240 residues long: Zein-alpha A20 (240 aa).

Residues 1-21 (MATKIFSLLMLLALSACVANA) form the signal peptide.

It belongs to the zein family.

Its function is as follows. Zeins are major seed storage proteins. The sequence is that of Zein-alpha A20 from Zea mays (Maize).